Here is a 318-residue protein sequence, read N- to C-terminus: B3 domain-containing protein At1g05930 (318 aa).

Residues 201–293 constitute a DNA-binding region (TF-B3); that stretch reads FNRLISNDFL…VLCFAMRQWR (93 aa).

It is found in the nucleus. This is B3 domain-containing protein At1g05930 from Arabidopsis thaliana (Mouse-ear cress).